The primary structure comprises 400 residues: NADH dehydrogenase-like protein Rv1812c (400 aa).

It belongs to the NADH dehydrogenase family. The cofactor is FAD.

This Mycobacterium tuberculosis (strain ATCC 25618 / H37Rv) protein is NADH dehydrogenase-like protein Rv1812c.